A 317-amino-acid polypeptide reads, in one-letter code: Acetyl-coenzyme A carboxylase carboxyl transferase subunit alpha (317 aa).

The region spanning 33 to 294 is the CoA carboxyltransferase C-terminal domain; that stretch reads NLDDEITRLQ…KKRLLADLAD (262 aa).

This sequence belongs to the AccA family. In terms of assembly, acetyl-CoA carboxylase is a heterohexamer composed of biotin carboxyl carrier protein (AccB), biotin carboxylase (AccC) and two subunits each of ACCase subunit alpha (AccA) and ACCase subunit beta (AccD).

Its subcellular location is the cytoplasm. It catalyses the reaction N(6)-carboxybiotinyl-L-lysyl-[protein] + acetyl-CoA = N(6)-biotinyl-L-lysyl-[protein] + malonyl-CoA. It functions in the pathway lipid metabolism; malonyl-CoA biosynthesis; malonyl-CoA from acetyl-CoA: step 1/1. Its function is as follows. Component of the acetyl coenzyme A carboxylase (ACC) complex. First, biotin carboxylase catalyzes the carboxylation of biotin on its carrier protein (BCCP) and then the CO(2) group is transferred by the carboxyltransferase to acetyl-CoA to form malonyl-CoA. The protein is Acetyl-coenzyme A carboxylase carboxyl transferase subunit alpha of Histophilus somni (strain 129Pt) (Haemophilus somnus).